The following is a 505-amino-acid chain: Aspartyl/glutamyl-tRNA(Asn/Gln) amidotransferase subunit B (505 aa).

The disordered stretch occupies residues 220 to 241 (NVSLRPRPAPGDPDAPFGTRSE).

The protein belongs to the GatB/GatE family. GatB subfamily. Heterotrimer of A, B and C subunits.

The enzyme catalyses L-glutamyl-tRNA(Gln) + L-glutamine + ATP + H2O = L-glutaminyl-tRNA(Gln) + L-glutamate + ADP + phosphate + H(+). The catalysed reaction is L-aspartyl-tRNA(Asn) + L-glutamine + ATP + H2O = L-asparaginyl-tRNA(Asn) + L-glutamate + ADP + phosphate + 2 H(+). Its function is as follows. Allows the formation of correctly charged Asn-tRNA(Asn) or Gln-tRNA(Gln) through the transamidation of misacylated Asp-tRNA(Asn) or Glu-tRNA(Gln) in organisms which lack either or both of asparaginyl-tRNA or glutaminyl-tRNA synthetases. The reaction takes place in the presence of glutamine and ATP through an activated phospho-Asp-tRNA(Asn) or phospho-Glu-tRNA(Gln). The polypeptide is Aspartyl/glutamyl-tRNA(Asn/Gln) amidotransferase subunit B (Frankia casuarinae (strain DSM 45818 / CECT 9043 / HFP020203 / CcI3)).